The primary structure comprises 1109 residues: Myosin ID heavy chain (1109 aa).

The Myosin motor domain maps to 7-687 (HGVDDMVMLS…TVFNLEELRE (681 aa)). 101–108 (GESGAGKT) serves as a coordination point for ATP. An actin-binding region spans residues 564 to 586 (IGALVKALSACTPHYIRCIKPNG). Residues 725–919 (KERRRLSIER…VSTPSDGLPA (195 aa)) enclose the TH1 domain. One can recognise an SH3 domain in the interval 958-1017 (NVKPSAKALYDFDAESSMELSFKEGDILTVLDQSSGDWWDAELKGRRGKVPSNYLQLIKN). A disordered region spans residues 1017-1109 (NAAPPRAGGP…APRGGMAPRV (93 aa)). Residues 1030–1043 (TGNRAPTTTTTSGG) are compositionally biased toward low complexity.

It belongs to the TRAFAC class myosin-kinesin ATPase superfamily. Myosin family. In terms of assembly, myosin I heavy chain is single-headed. Dimer of a heavy and a light chain. Inability to self-assemble into filaments.

The protein localises to the cell projection. The protein resides in the pseudopodium. It localises to the cytoplasm. It is found in the cell cortex. In terms of biological role, myosin is a protein that binds to actin and has ATPase activity that is activated by actin. Myosin id may have a role in chemotaxis and aggregation; it could serve to stabilize and even retract cortical structures, such as pseudopods and lamellopods. Involved in the process of phagocytosis. The protein is Myosin ID heavy chain (myoD) of Dictyostelium discoideum (Social amoeba).